The sequence spans 886 residues: Alanine--tRNA ligase (886 aa).

Residues histidine 570, histidine 574, cysteine 672, and histidine 676 each contribute to the Zn(2+) site.

The protein belongs to the class-II aminoacyl-tRNA synthetase family. Zn(2+) is required as a cofactor.

It localises to the cytoplasm. The catalysed reaction is tRNA(Ala) + L-alanine + ATP = L-alanyl-tRNA(Ala) + AMP + diphosphate. In terms of biological role, catalyzes the attachment of alanine to tRNA(Ala) in a two-step reaction: alanine is first activated by ATP to form Ala-AMP and then transferred to the acceptor end of tRNA(Ala). Also edits incorrectly charged Ser-tRNA(Ala) and Gly-tRNA(Ala) via its editing domain. The protein is Alanine--tRNA ligase of Acidothermus cellulolyticus (strain ATCC 43068 / DSM 8971 / 11B).